A 535-amino-acid chain; its full sequence is Methylmalonate-semialdehyde/malonate-semialdehyde dehydrogenase [acylating], mitochondrial (535 aa).

Residues Met1–Phe32 constitute a mitochondrion transit peptide. N6-acetyllysine; alternate occurs at positions 47, 52, 55, and 76. An N6-succinyllysine; alternate mark is found at Lys47, Lys52, Lys55, and Lys76. Lys87 carries the N6-acetyllysine modification. An N6-acetyllysine; alternate mark is found at Lys117 and Lys129. 2 positions are modified to N6-succinyllysine; alternate: Lys117 and Lys129. 6 residues coordinate NAD(+): Ala183, Phe185, Lys209, Glu212, Arg213, and Ser262. Ser262 is subject to Phosphoserine. Position 298 is an N6-acetyllysine (Lys298). Cys317 (nucleophile) is an active-site residue. An N6-acetyllysine mark is found at Lys330 and Lys331. An N6-acetyllysine; alternate mark is found at Lys364 and Lys376. 2 positions are modified to N6-succinyllysine; alternate: Lys364 and Lys376. Ser380 bears the Phosphoserine mark. Lys391 is modified (N6-succinyllysine). Glu417 contacts NAD(+). Lys500 is subject to N6-acetyllysine. The residue at position 517 (Lys517) is an N6-succinyllysine.

It belongs to the aldehyde dehydrogenase family. In terms of assembly, homotetramer. In terms of tissue distribution, expressed in the head and flagellum of epididymal sperm but not in testicular sperm (at protein level). Kidney &gt; liver &gt; heart &gt; muscle &gt; brain.

Its subcellular location is the mitochondrion. It catalyses the reaction 3-oxopropanoate + NAD(+) + CoA + H2O = hydrogencarbonate + acetyl-CoA + NADH + H(+). The enzyme catalyses 2-methyl-3-oxopropanoate + NAD(+) + CoA + H2O = propanoyl-CoA + hydrogencarbonate + NADH + H(+). The catalysed reaction is (R)-2-methyl-3-oxopropanoate + NAD(+) + CoA + H2O = propanoyl-CoA + hydrogencarbonate + NADH + H(+). It carries out the reaction (S)-2-methyl-3-oxopropanoate + NAD(+) + CoA + H2O = propanoyl-CoA + hydrogencarbonate + NADH + H(+). Functionally, malonate and methylmalonate semialdehyde dehydrogenase involved in the catabolism of valine, thymine, and compounds catabolized by way of beta-alanine, including uracil and cytidine. This is Methylmalonate-semialdehyde/malonate-semialdehyde dehydrogenase [acylating], mitochondrial from Rattus norvegicus (Rat).